The primary structure comprises 284 residues: NADPH-dependent 7-cyano-7-deazaguanine reductase (284 aa).

91-93 contacts substrate; that stretch reads IES. Position 93–94 (93–94) interacts with NADPH; the sequence is SK. The active-site Thioimide intermediate is the C192. D199 functions as the Proton donor in the catalytic mechanism. 231-232 provides a ligand contact to substrate; sequence HE. 260-261 contacts NADPH; it reads RG.

The protein belongs to the GTP cyclohydrolase I family. QueF type 2 subfamily. Homodimer.

It localises to the cytoplasm. It catalyses the reaction 7-aminomethyl-7-carbaguanine + 2 NADP(+) = 7-cyano-7-deazaguanine + 2 NADPH + 3 H(+). Its pathway is tRNA modification; tRNA-queuosine biosynthesis. Functionally, catalyzes the NADPH-dependent reduction of 7-cyano-7-deazaguanine (preQ0) to 7-aminomethyl-7-deazaguanine (preQ1). This Shewanella denitrificans (strain OS217 / ATCC BAA-1090 / DSM 15013) protein is NADPH-dependent 7-cyano-7-deazaguanine reductase.